Consider the following 349-residue polypeptide: uncharacterized protein (349 aa).

The helical transmembrane segment at 221 to 241 threads the bilayer; the sequence is AFVVWIGSGLNIIWWTGIVLL. Positions 328–339 are enriched in pro residues; sequence VASAPPAVPSQP. The segment at 328–349 is disordered; it reads VASAPPAVPSQPPEYSSVFPPV.

Its subcellular location is the host membrane. This is an uncharacterized protein from Human cytomegalovirus (strain Merlin) (HHV-5).